Reading from the N-terminus, the 477-residue chain is Myosin-binding protein H (477 aa).

Residues 1–73 are disordered; sequence MMEKNTSEGP…APPSEDVPSA (73 aa). Thr-6 and Thr-26 each carry phosphothreonine. The region spanning 73 to 168 is the Fibronectin type-III 1 domain; the sequence is APLLLTLDDV…LDQPIHIREN (96 aa). Residues 172–260 enclose the Ig-like C2-type 1 domain; the sequence is PKIRVPRHLR…EDLEAKAVID (89 aa). Residues 269–364 enclose the Fibronectin type-III 2 domain; sequence PPSSIRLLDV…TKELAHIQKA (96 aa). Residues 382–466 form the Ig-like C2-type 2 domain; sequence PSFTQPLADH…INVLGEASVD (85 aa).

This sequence belongs to the immunoglobulin superfamily. MyBP family. Mainly expressed in the skeletal muscle. Slightly expressed in the left atrium and arteria mammaria interna.

Functionally, binds to myosin; probably involved in interaction with thick myofilaments in the A-band. This chain is Myosin-binding protein H (MYBPH), found in Homo sapiens (Human).